The following is an 895-amino-acid chain: Cellulose 1,4-beta-cellobiosidase (895 aa).

An N-terminal signal peptide occupies residues 1–27 (MNFRRMLCAAIVLTIVLSIMLPSTVFA). Positions 40–199 (NDLLYERTFD…YLDDVSLYDP (160 aa)) constitute a CBM-cenC domain. Positions 199–240 (PRFVKPVEYVLPQPDVRVNQVGYLPFAKKYATVVSSSTSPLK) are linker. The catalytic stretch occupies residues 241–815 (WQLLNSANQV…WVTAYLDEID (575 aa)). The active-site Nucleophile is the aspartate 386. Catalysis depends on residues histidine 737, aspartate 786, and glutamate 795. One can recognise a Dockerin domain in the interval 828–894 (PEVIYGDCNG…ILKEIDVLPH (67 aa)).

This sequence belongs to the glycosyl hydrolase 9 (cellulase E) family.

Its subcellular location is the secreted. It carries out the reaction Hydrolysis of (1-&gt;4)-beta-D-glucosidic linkages in cellulose and cellotetraose, releasing cellobiose from the non-reducing ends of the chains.. Inhibited by cellobiose. The protein is Cellulose 1,4-beta-cellobiosidase (celK) of Acetivibrio thermocellus (Hungateiclostridium thermocellum).